The sequence spans 135 residues: Interleukin-4 (135 aa).

An N-terminal signal peptide occupies residues M1–G24. Intrachain disulfides connect C27-C135, C48-C85, and C70-C105. Residue N62 is glycosylated (N-linked (GlcNAc...) asparagine).

It belongs to the IL-4/IL-13 family.

Its subcellular location is the secreted. In terms of biological role, participates in at least several B-cell activation processes as well as of other cell types. It is a costimulator of DNA-synthesis. It induces the expression of class II MHC molecules on resting B-cells. It enhances both secretion and cell surface expression of IgE and IgG1. It also regulates the expression of the low affinity Fc receptor for IgE (CD23) on both lymphocytes and monocytes. Positively regulates IL31RA expression in macrophages. Stimulates autophagy in dendritic cells by interfering with mTORC1 signaling and through the induction of RUFY4. The polypeptide is Interleukin-4 (IL4) (Bubalus bubalis (Domestic water buffalo)).